A 336-amino-acid chain; its full sequence is Eukaryotic translation initiation factor 3 subunit H (336 aa).

In terms of domain architecture, MPN spans 21 to 154; the sequence is VQCDGLAAMK…LKAYRLTPQA (134 aa).

The protein belongs to the eIF-3 subunit H family. Component of the eukaryotic translation initiation factor 3 (eIF-3) complex.

Its subcellular location is the cytoplasm. Component of the eukaryotic translation initiation factor 3 (eIF-3) complex, which is involved in protein synthesis of a specialized repertoire of mRNAs and, together with other initiation factors, stimulates binding of mRNA and methionyl-tRNAi to the 40S ribosome. The eIF-3 complex specifically targets and initiates translation of a subset of mRNAs involved in cell proliferation. The chain is Eukaryotic translation initiation factor 3 subunit H from Culex quinquefasciatus (Southern house mosquito).